A 512-amino-acid polypeptide reads, in one-letter code: FAD-linked oxidoreductase iacH (512 aa).

The signal sequence occupies residues 1–22 (MVSLKACVVAYGFTLLPALVSG). Asn-39, Asn-55, Asn-69, Asn-210, Asn-217, Asn-278, Asn-295, and Asn-367 each carry an N-linked (GlcNAc...) asparagine glycan. The region spanning 77–248 (LDTPDVQLVV…TSLEKKIYPG (172 aa)) is the FAD-binding PCMH-type domain.

The protein belongs to the oxygen-dependent FAD-linked oxidoreductase family. The cofactor is FAD.

Its pathway is secondary metabolite biosynthesis. FAD-linked oxidoreductase; part of the gene cluster that mediates the biosynthesis of iso-A82775C, a enylepoxycyclohexane and biosynthetic precursor of the chloropestolide anticancer natural products. Within the cluster, the prenyltransferase iacE prenylates siccayne to generate pestalodiol E, using dimethylallyl diphosphate (DMAPP) as cosubstrate. The probable oxidoreductase iacF is then involved in the epoxidation of pestalodiol F to pestalodiol F, which is further converted to pestalofone A by the short-chain dehydrogenase/reductase iacG. Iso-A82775C is subsequently generated from pestalofone A by the short-chain dehydrogenase/reductase iacC. Iso-A82775C is further condensed with maldoxin via a Diels-Alder reaction to produce the anticancer natural products chloropestolides A to E. In Pestalotiopsis fici (strain W106-1 / CGMCC3.15140), this protein is FAD-linked oxidoreductase iacH.